A 616-amino-acid polypeptide reads, in one-letter code: GDP-Man:Man(3)GlcNAc(2)-PP-Dol alpha-1,2-mannosyltransferase (616 aa).

Residue M1 is a topological domain, lumenal. Residues G2–V21 form a helical membrane-spanning segment. Residues S22–R199 lie on the Cytoplasmic side of the membrane. An intramembrane region (helical) is located at residues F200–L220. Over S221–H460 the chain is Cytoplasmic. The segment at residues F461–A481 is an intramembrane region (helical). Residues G482–Y616 are Cytoplasmic-facing.

This sequence belongs to the glycosyltransferase group 1 family.

It is found in the endoplasmic reticulum membrane. It carries out the reaction an alpha-D-Man-(1-&gt;3)-[alpha-D-Man-(1-&gt;6)]-beta-D-Man-(1-&gt;4)-beta-D-GlcNAc-(1-&gt;4)-alpha-D-GlcNAc-diphospho-di-trans,poly-cis-dolichol + 2 GDP-alpha-D-mannose = an alpha-D-Man-(1-&gt;2)-alpha-D-Man-(1-&gt;2)-alpha-D-Man-(1-&gt;3)-[alpha-D-Man-(1-&gt;6)]-beta-D-Man-(1-&gt;4)-beta-D-GlcNAc-(1-&gt;4)-alpha-D-GlcNAc-diphospho-di-trans,poly-cis-dolichol + 2 GDP + 2 H(+). It participates in protein modification; protein glycosylation. Functionally, GDP-Man:Man(3)GlcNAc(2)-PP-Dol alpha-1,2-mannosyltransferase that operates in the biosynthetic pathway of dolichol-linked oligosaccharides, the glycan precursors employed in protein asparagine (N)-glycosylation. The assembly of dolichol-linked oligosaccharides begins on the cytosolic side of the endoplasmic reticulum membrane and finishes in its lumen. The sequential addition of sugars to dolichol pyrophosphate produces dolichol-linked oligosaccharides containing fourteen sugars, including two GlcNAcs, nine mannoses and three glucoses. Once assembled, the oligosaccharide is transferred from the lipid to nascent proteins by oligosaccharyltransferases. Catalyzes, on the cytoplasmic face of the endoplasmic reticulum, the addition of the fourth and fifth mannose residues to the dolichol-linked oligosaccharide chain, to produce Man(5)GlcNAc(2)-PP-dolichol core oligosaccharide. The chain is GDP-Man:Man(3)GlcNAc(2)-PP-Dol alpha-1,2-mannosyltransferase (ALG11) from Debaryomyces hansenii (strain ATCC 36239 / CBS 767 / BCRC 21394 / JCM 1990 / NBRC 0083 / IGC 2968) (Yeast).